The chain runs to 389 residues: S-adenosylmethionine synthase (389 aa).

Position 18 (histidine 18) interacts with ATP. A Mg(2+)-binding site is contributed by aspartate 20. Position 46 (glutamate 46) interacts with K(+). The L-methionine site is built by glutamate 59 and glutamine 103. The tract at residues 103–113 is flexible loop; sequence QSADIAMGVDS. ATP is bound by residues 168–170, aspartate 244, 250–251, alanine 267, and lysine 271; these read DSK and RK. Aspartate 244 provides a ligand contact to L-methionine. An L-methionine-binding site is contributed by lysine 275.

This sequence belongs to the AdoMet synthase family. In terms of assembly, homotetramer; dimer of dimers. The cofactor is Mg(2+). It depends on K(+) as a cofactor.

It is found in the cytoplasm. The enzyme catalyses L-methionine + ATP + H2O = S-adenosyl-L-methionine + phosphate + diphosphate. Its pathway is amino-acid biosynthesis; S-adenosyl-L-methionine biosynthesis; S-adenosyl-L-methionine from L-methionine: step 1/1. Its function is as follows. Catalyzes the formation of S-adenosylmethionine (AdoMet) from methionine and ATP. The overall synthetic reaction is composed of two sequential steps, AdoMet formation and the subsequent tripolyphosphate hydrolysis which occurs prior to release of AdoMet from the enzyme. The polypeptide is S-adenosylmethionine synthase (Pelagibacter ubique (strain HTCC1062)).